Reading from the N-terminus, the 279-residue chain is Large ribosomal subunit protein uL2 (279 aa).

The segment at 218 to 279 (RPQTRGSAMN…ITRRKSNPKR (62 aa)) is disordered. A compositionally biased stretch (basic residues) spans 255–279 (KGSKTRRKKASDKLIITRRKSNPKR).

This sequence belongs to the universal ribosomal protein uL2 family. In terms of assembly, part of the 50S ribosomal subunit. Forms a bridge to the 30S subunit in the 70S ribosome.

Its function is as follows. One of the primary rRNA binding proteins. Required for association of the 30S and 50S subunits to form the 70S ribosome, for tRNA binding and peptide bond formation. It has been suggested to have peptidyltransferase activity; this is somewhat controversial. Makes several contacts with the 16S rRNA in the 70S ribosome. The protein is Large ribosomal subunit protein uL2 of Sulfurimonas denitrificans (strain ATCC 33889 / DSM 1251) (Thiomicrospira denitrificans (strain ATCC 33889 / DSM 1251)).